A 463-amino-acid chain; its full sequence is Endoglucanase EG-1 (463 aa).

An N-terminal signal peptide occupies residues 1 to 22 (MAPSATLPLTTAILAIGRLVAA). A catalytic region spans residues 23–397 (QQPGTSTPEV…DIGSTTNSTG (375 aa)). N78, N164, N204, and N208 each carry an N-linked (GlcNAc...) asparagine glycan. E218 serves as the catalytic Nucleophile. The active-site Proton donor is E223. Residues 390-429 (GSTTNSTGGNPPPPPPPASSTTFSTTRRSSTTSSSPSCTQ) are disordered. A glycan (N-linked (GlcNAc...) asparagine) is linked at N394. The segment at 402-427 (PPPPPASSTTFSTTRRSSTTSSSPSC) is linker. Over residues 408 to 429 (SSTTFSTTRRSSTTSSSPSCTQ) the composition is skewed to low complexity. A CBM1 domain is found at 427–463 (CTQTHWGQCGGIGYTGCKTCTSGTTCQYGNDYYSQCL). Cystine bridges form between C435–C452 and C446–C462.

Belongs to the glycosyl hydrolase 7 (cellulase C) family.

The protein resides in the secreted. The enzyme catalyses Endohydrolysis of (1-&gt;4)-beta-D-glucosidic linkages in cellulose, lichenin and cereal beta-D-glucans.. The biological conversion of cellulose to glucose generally requires three types of hydrolytic enzymes: (1) Endoglucanases which cut internal beta-1,4-glucosidic bonds; (2) Exocellobiohydrolases that cut the disaccharide cellobiose from the non-reducing end of the cellulose polymer chain; (3) Beta-1,4-glucosidases which hydrolyze the cellobiose and other short cello-oligosaccharides to glucose. The chain is Endoglucanase EG-1 (egl1) from Trichoderma longibrachiatum.